A 151-amino-acid chain; its full sequence is Large ribosomal subunit protein bL9 (151 aa).

Belongs to the bacterial ribosomal protein bL9 family.

Its function is as follows. Binds to the 23S rRNA. The protein is Large ribosomal subunit protein bL9 of Chlorobium phaeobacteroides (strain DSM 266 / SMG 266 / 2430).